Consider the following 386-residue polypeptide: Succinate--CoA ligase [ADP-forming] subunit beta (386 aa).

The ATP-grasp domain occupies Lys-9–Glu-244. ATP is bound by residues Lys-46, Gly-53–Gly-55, Glu-99, Cys-102, and Glu-107. Residues Asn-199 and Asp-213 each coordinate Mg(2+). Substrate-binding positions include Asn-264 and Gly-321–Met-323.

The protein belongs to the succinate/malate CoA ligase beta subunit family. In terms of assembly, heterotetramer of two alpha and two beta subunits. Mg(2+) serves as cofactor.

It catalyses the reaction succinate + ATP + CoA = succinyl-CoA + ADP + phosphate. The enzyme catalyses GTP + succinate + CoA = succinyl-CoA + GDP + phosphate. Its pathway is carbohydrate metabolism; tricarboxylic acid cycle; succinate from succinyl-CoA (ligase route): step 1/1. In terms of biological role, succinyl-CoA synthetase functions in the citric acid cycle (TCA), coupling the hydrolysis of succinyl-CoA to the synthesis of either ATP or GTP and thus represents the only step of substrate-level phosphorylation in the TCA. The beta subunit provides nucleotide specificity of the enzyme and binds the substrate succinate, while the binding sites for coenzyme A and phosphate are found in the alpha subunit. This Bacillus cereus (strain B4264) protein is Succinate--CoA ligase [ADP-forming] subunit beta.